We begin with the raw amino-acid sequence, 67 residues long: DNA-directed RNA polymerase subunit omega (67 aa).

Belongs to the RNA polymerase subunit omega family. In terms of assembly, the RNAP catalytic core consists of 2 alpha, 1 beta, 1 beta' and 1 omega subunit. When a sigma factor is associated with the core the holoenzyme is formed, which can initiate transcription.

It carries out the reaction RNA(n) + a ribonucleoside 5'-triphosphate = RNA(n+1) + diphosphate. Its function is as follows. Promotes RNA polymerase assembly. Latches the N- and C-terminal regions of the beta' subunit thereby facilitating its interaction with the beta and alpha subunits. The sequence is that of DNA-directed RNA polymerase subunit omega from Burkholderia pseudomallei (strain 1106a).